A 514-amino-acid chain; its full sequence is F-box-like/WD repeat-containing protein TBL1XR1 (514 aa).

The residue at position 2 (S2) is an N-acetylserine. Positions 4-36 constitute a LisH domain; it reads SSDEVNFLVYRYLQESGFSHSAFTFGIESHISQ. In terms of domain architecture, F-box-like spans 41 to 86; it reads GALVPPAALISIIQKGLQYVEAEVSINEDGTLFDGRPIESLSLIDA. N6-acetyllysine is present on K102. Positions 114 to 139 are disordered; the sequence is AAAATNQQGSAKNGENTANGEENGAH. Residues 124 to 135 show a composition bias toward low complexity; that stretch reads AKNGENTANGEE. WD repeat units lie at residues 167 to 206, 223 to 262, 264 to 303, 306 to 344, 347 to 386, 389 to 437, 440 to 479, and 481 to 513; these read GHES…TSGP, PSNK…ASTL, QHKG…AKQQ, FHSA…PIKT, GHTN…CVHD, AHNK…CIHT, KHQE…LVHS, and RGTG…LDLR. Residue K277 forms a Glycyl lysine isopeptide (Lys-Gly) (interchain with G-Cter in SUMO2) linkage.

This sequence belongs to the WD repeat EBI family. As to quaternary structure, component of the N-Cor repressor complex, at least composed of NCOR1, NCOR2, HDAC3, TBL1X, TBL1XR1, CORO2A and GPS2. Probable component of some E3 ubiquitin ligase complex. Interacts with histones H2B and H4. Interacts with MECP2; bridges interaction between MECP2 and NCOR1. Interacts with USP44.

Its subcellular location is the nucleus. Its function is as follows. F-box-like protein involved in the recruitment of the ubiquitin/19S proteasome complex to nuclear receptor-regulated transcription units. Plays an essential role in transcription activation mediated by nuclear receptors. Probably acts as integral component of the N-Cor corepressor complex that mediates the recruitment of the 19S proteasome complex, leading to the subsequent proteasomal degradation of N-Cor complex, thereby allowing cofactor exchange, and transcription activation. This is F-box-like/WD repeat-containing protein TBL1XR1 (Tbl1xr1) from Mus musculus (Mouse).